An 81-amino-acid polypeptide reads, in one-letter code: uncharacterized protein (81 aa).

2 helical membrane-spanning segments follow: residues I4–T24 and N61–I81.

The protein resides in the cell membrane. This is an uncharacterized protein from Bacillus subtilis (strain 168).